Reading from the N-terminus, the 176-residue chain is Large ribosomal subunit protein uL16 (176 aa).

This sequence belongs to the universal ribosomal protein uL16 family.

The protein is Large ribosomal subunit protein uL16 of Halorubrum lacusprofundi (strain ATCC 49239 / DSM 5036 / JCM 8891 / ACAM 34).